The chain runs to 570 residues: L-ascorbate oxidase (570 aa).

The N-terminal stretch at 1–18 (MGMWWIVAVAILAHTASA) is a signal peptide. Plastocyanin-like domains follow at residues 33-140 (WPDC…IIDV) and 154-317 (FNLL…LNYV). Disulfide bonds link Cys36-Cys219, Cys98-Cys557, and Cys197-Cys211. Residues His77 and His79 each contribute to the Cu cation site. A glycan (N-linked (GlcNAc...) asparagine) is linked at Asn109. Cu cation is bound by residues His121 and His123. N-linked (GlcNAc...) asparagine glycosylation occurs at Asn196. Residues Asn229, Asn343, Asn384, Asn407, Asn434, Asn442, and Asn458 are each glycosylated (N-linked (GlcNAc...) asparagine). The region spanning 426 to 543 (RNRNAKQGNV…MGMGVVFAEG (118 aa)) is the Plastocyanin-like 3 domain. Residues His463, His466, His468, His525, Cys526, His527, His531, and Met536 each contribute to the Cu cation site.

The protein belongs to the multicopper oxidase family. In terms of assembly, dimer. Requires Cu cation as cofactor.

It localises to the secreted. The catalysed reaction is 4 L-ascorbate + O2 = 4 monodehydro-L-ascorbate radical + 2 H2O. It participates in cofactor degradation; L-ascorbate degradation. Ascorbate oxidase involved in a redox system involving ascorbic acid (AsA). The oxidation of AsA represses responses to high salinity and oxidative stress conditions such as vegetative growth and seed production reductions. Negative regulator of defense responses toward incompatible Turnip mosaic virus (TuMV strain UK1) by preventing jasmonic acid (JA)- dependent accumulation of ascorbic acid (AsA, AS) and dehydroascobic acid (DHA). The polypeptide is L-ascorbate oxidase (Brassica rapa subsp. pekinensis (Chinese cabbage)).